We begin with the raw amino-acid sequence, 106 residues long: Iron-sulfur cluster assembly protein CyaY (106 aa).

The protein belongs to the frataxin family.

Its function is as follows. Involved in iron-sulfur (Fe-S) cluster assembly. May act as a regulator of Fe-S biogenesis. The polypeptide is Iron-sulfur cluster assembly protein CyaY (Photorhabdus laumondii subsp. laumondii (strain DSM 15139 / CIP 105565 / TT01) (Photorhabdus luminescens subsp. laumondii)).